Consider the following 693-residue polypeptide: Polyribonucleotide nucleotidyltransferase (693 aa).

Residues Asp485 and Asp491 each coordinate Mg(2+). Residues 552 to 611 enclose the KH domain; the sequence is PRIMVLEINPSKIGDLIGPSGKNIKKIIEETHTTINIKPEGLVYISAPDQESAEKAAQMV. The region spanning 621–691 is the S1 motif domain; sequence GDIFLGKVIR…SSGRISLTRK (71 aa).

Belongs to the polyribonucleotide nucleotidyltransferase family. The cofactor is Mg(2+).

Its subcellular location is the cytoplasm. The enzyme catalyses RNA(n+1) + phosphate = RNA(n) + a ribonucleoside 5'-diphosphate. In terms of biological role, involved in mRNA degradation. Catalyzes the phosphorolysis of single-stranded polyribonucleotides processively in the 3'- to 5'-direction. This Dictyoglomus thermophilum (strain ATCC 35947 / DSM 3960 / H-6-12) protein is Polyribonucleotide nucleotidyltransferase.